We begin with the raw amino-acid sequence, 389 residues long: Mating-type protein MAT-1 (389 aa).

Positions 70-127 (KAKKALNAFVGFRCYYISIPHFKSWPMKKLSNLIGLLWETDPNKSLWSLMTKAWSAIR) form a DNA-binding region, alpha box.

This sequence belongs to the MATALPHA1 family.

It localises to the nucleus. Its function is as follows. Mating type proteins are sequence specific DNA-binding proteins that act as master switches in fungal differentiation by controlling gene expression in a cell type-specific fashion. Transcriptional activator that induces the transcription of alpha-specific genes. The sequence is that of Mating-type protein MAT-1 (MAT1) from Alternaria alternata (Alternaria rot fungus).